The following is a 260-amino-acid chain: Type II methyltransferase M.CviBI (260 aa).

The S-adenosyl-L-methionine site is built by W7, K11, D54, and D177.

This sequence belongs to the N(4)/N(6)-methyltransferase family.

It carries out the reaction a 2'-deoxyadenosine in DNA + S-adenosyl-L-methionine = an N(6)-methyl-2'-deoxyadenosine in DNA + S-adenosyl-L-homocysteine + H(+). In terms of biological role, a alpha subtype methylase, recognizes the double-stranded sequence 5'-GANTC-3', methylates A-2 on both strands, and protects the DNA from cleavage by the CviBI endonuclease. In Paramecium bursaria Chlorella virus NC1A (PBCV-NC1A), this protein is Type II methyltransferase M.CviBI.